The primary structure comprises 57 residues: MLLISKTLFPIPRSAEELWEGTYTLVVAFVLAFLVYSDYLSNLSPFGEILSSPCIST.

A helical membrane pass occupies residues 21-37 (GTYTLVVAFVLAFLVYS).

It localises to the host membrane. This is an uncharacterized protein from Human herpesvirus 6B (strain Z29) (HHV-6 variant B).